Here is a 468-residue protein sequence, read N- to C-terminus: A-type ATP synthase subunit B (468 aa).

Belongs to the ATPase alpha/beta chains family. As to quaternary structure, has multiple subunits with at least A(3), B(3), C, D, E, F, H, I and proteolipid K(x).

It localises to the cell membrane. Its function is as follows. Component of the A-type ATP synthase that produces ATP from ADP in the presence of a proton gradient across the membrane. The B chain is a regulatory subunit. In Haloferax volcanii (strain ATCC 29605 / DSM 3757 / JCM 8879 / NBRC 14742 / NCIMB 2012 / VKM B-1768 / DS2) (Halobacterium volcanii), this protein is A-type ATP synthase subunit B.